The following is a 202-amino-acid chain: N-(5'-phosphoribosyl)anthranilate isomerase (202 aa).

This sequence belongs to the TrpF family.

The catalysed reaction is N-(5-phospho-beta-D-ribosyl)anthranilate = 1-(2-carboxyphenylamino)-1-deoxy-D-ribulose 5-phosphate. Its pathway is amino-acid biosynthesis; L-tryptophan biosynthesis; L-tryptophan from chorismate: step 3/5. The polypeptide is N-(5'-phosphoribosyl)anthranilate isomerase (Listeria monocytogenes serotype 4a (strain HCC23)).